The sequence spans 184 residues: Photosystem I assembly protein Ycf4 (184 aa).

The next 2 membrane-spanning stretches (helical) occupy residues 22-42 (FCWA…GISS) and 64-84 (IVMS…WSTI).

This sequence belongs to the Ycf4 family.

Its subcellular location is the plastid. It localises to the chloroplast thylakoid membrane. Seems to be required for the assembly of the photosystem I complex. The chain is Photosystem I assembly protein Ycf4 from Piper cenocladum (Ant piper).